The following is a 165-amino-acid chain: MPSSYSFDVVSEFDQQELVNAIDQLRREVDQRYDLKDSKTKIDIKEDELSIVSLSDMTIESVKDILLQKATKRNLSLKIFDFQKIETIGGNMVMQIVKLKKGLSQEISKKLSKLVRDNMKKVTASIQGDSLRITGKNKDDLQAAINLIKKQEEELDIALQFQNYR.

Belongs to the YajQ family.

Its function is as follows. Nucleotide-binding protein. The chain is Nucleotide-binding protein NATL1_05371 from Prochlorococcus marinus (strain NATL1A).